The sequence spans 444 residues: MTFLQYFKTDGIRGKVGVNPITPDFLLKLGWSIGIVLGKNKTQKIIIGRDTRISGTMLQSILEFGILSTGVSTLLAGCMPTSAISYFTKSLNASAGIVISGSHNPFYDNGIKIFYKNGVKLTKEIEFSIEQKVQHTFLYPDYVNFGHSNNILDPESLYIDFCKKNFPKDLNLSKFTIILDCANGATFKIAPKIFEDLGARVITVAINPNGVNINQNSGSTNILMLKKIVLSESADLGLAFDGDGDRVIMVDHLGNQVDGDQIIYIIAKEYLKENKLKGGVVGTSMTNMGVILGLKKLGIPFCPAQIGDRNVYEKIKEKKWILGAEKSGHIVLLDKHSTGDGIIASLQVLLTMINNHMTLYDLSNQIKLFPQVFLNIFLKQDKDFEKDIKIQNILTQYKNILGQNSRVLVRRSGTEPCIRIMVEGEDYLKVYELAQYIGKTIKLL.

Ser-102 acts as the Phosphoserine intermediate in catalysis. Residues Ser-102, Asp-241, Asp-243, and Asp-245 each contribute to the Mg(2+) site. Ser-102 carries the phosphoserine modification.

It belongs to the phosphohexose mutase family. Mg(2+) serves as cofactor. Activated by phosphorylation.

It catalyses the reaction alpha-D-glucosamine 1-phosphate = D-glucosamine 6-phosphate. Functionally, catalyzes the conversion of glucosamine-6-phosphate to glucosamine-1-phosphate. This is Phosphoglucosamine mutase from Buchnera aphidicola subsp. Acyrthosiphon pisum (strain 5A).